Consider the following 129-residue polypeptide: Acetophenone carboxylase beta subunit (129 aa).

As to quaternary structure, acetophenone carboxylase consists of five subunits; a heterooctameric subcomplex of two alpha (Apc1), two beta (Apc2), two gamma (Apc3) and two delta (Apc4) subunits assembles with the epsilon (Apc5) subunit in an unknown stoichiometry. The cofactor is Mg(2+). Mn(2+) serves as cofactor.

The protein localises to the cytoplasm. The enzyme catalyses acetophenone + hydrogencarbonate + 2 ATP + H2O = 3-oxo-3-phenylpropanoate + 2 ADP + 2 phosphate + 2 H(+). Its activity is regulated as follows. Inhibited by zinc ions, carbamoylphosphate and beta,gamma-imido-ATP. Its function is as follows. Catalyzes the carboxylation of acetophenone to form 3-oxo-3-phenylpropanoate (benzoylacetate) in the anaerobic catabolism of ethylbenzene. Also carboxylates propiophenone at the same rate and 4-acetyl-pyridine at lower rates. In Aromatoleum aromaticum (strain DSM 19018 / LMG 30748 / EbN1) (Azoarcus sp. (strain EbN1)), this protein is Acetophenone carboxylase beta subunit (apc2).